A 210-amino-acid polypeptide reads, in one-letter code: Urease accessory protein UreG (210 aa).

14–21 (GPVGSGKT) contributes to the GTP binding site.

It belongs to the SIMIBI class G3E GTPase family. UreG subfamily. Homodimer. UreD, UreF and UreG form a complex that acts as a GTP-hydrolysis-dependent molecular chaperone, activating the urease apoprotein by helping to assemble the nickel containing metallocenter of UreC. The UreE protein probably delivers the nickel.

The protein localises to the cytoplasm. Facilitates the functional incorporation of the urease nickel metallocenter. This process requires GTP hydrolysis, probably effectuated by UreG. The protein is Urease accessory protein UreG of Rhodopseudomonas palustris (strain BisB5).